Consider the following 406-residue polypeptide: Serine/threonine transporter SstT (406 aa).

Helical transmembrane passes span 15–35 (LVLQ…VSPS), 47–67 (FVGA…AASI), 81–101 (IIAM…VLSF), 140–160 (ALMS…GLAL), 191–211 (FGIF…ALAG), 215–235 (LLVV…PAMV), 289–309 (IPLG…TLTL), 315–335 (MGIE…AVSA), and 362–382 (IAMQ…SAET).

It belongs to the dicarboxylate/amino acid:cation symporter (DAACS) (TC 2.A.23) family.

It is found in the cell inner membrane. It catalyses the reaction L-serine(in) + Na(+)(in) = L-serine(out) + Na(+)(out). The enzyme catalyses L-threonine(in) + Na(+)(in) = L-threonine(out) + Na(+)(out). Its function is as follows. Involved in the import of serine and threonine into the cell, with the concomitant import of sodium (symport system). This Vibrio vulnificus (strain CMCP6) protein is Serine/threonine transporter SstT.